The sequence spans 156 residues: MNLNATILGQAIAFVLFVIFCMKYVWPPIMAAIEKRQQEIADGLSSAERAKKDLDLAQANATDQLKKAKAEAQVIIEQASKRKAQILDEAKAEAEQERNKIVAQAQAEIDAERKRAREELRKQVAMLAIAGAEKIIERSVDEAANSDIVDKLVAEL.

The helical transmembrane segment at 11-31 (AIAFVLFVIFCMKYVWPPIMA) threads the bilayer.

It belongs to the ATPase B chain family. F-type ATPases have 2 components, F(1) - the catalytic core - and F(0) - the membrane proton channel. F(1) has five subunits: alpha(3), beta(3), gamma(1), delta(1), epsilon(1). F(0) has three main subunits: a(1), b(2) and c(10-14). The alpha and beta chains form an alternating ring which encloses part of the gamma chain. F(1) is attached to F(0) by a central stalk formed by the gamma and epsilon chains, while a peripheral stalk is formed by the delta and b chains.

The protein resides in the cell inner membrane. F(1)F(0) ATP synthase produces ATP from ADP in the presence of a proton or sodium gradient. F-type ATPases consist of two structural domains, F(1) containing the extramembraneous catalytic core and F(0) containing the membrane proton channel, linked together by a central stalk and a peripheral stalk. During catalysis, ATP synthesis in the catalytic domain of F(1) is coupled via a rotary mechanism of the central stalk subunits to proton translocation. Its function is as follows. Component of the F(0) channel, it forms part of the peripheral stalk, linking F(1) to F(0). The polypeptide is ATP synthase subunit b (Yersinia pseudotuberculosis serotype O:1b (strain IP 31758)).